The primary structure comprises 513 residues: Ankyrin repeat-containing protein YIL001W (513 aa).

ANK repeat units lie at residues 8 to 37 (KNFE…NVNS) and 41 to 70 (FDNS…VCDR). BTB domains follow at residues 122 to 179 (RDIT…KFLY) and 274 to 360 (PDVQ…DIPW).

This Saccharomyces cerevisiae (strain ATCC 204508 / S288c) (Baker's yeast) protein is Ankyrin repeat-containing protein YIL001W.